Consider the following 208-residue polypeptide: Translation initiation factor 2 subunit beta (208 aa).

The TRAM domain occupies 144 to 202; sequence GIEEGKEYTVEISEVGSSGEGRASFRGFTIFVPGTKKGETVKVKIKKIKNDVAIAEVVS.

This sequence belongs to the eIF-2-beta/eIF-5 family. Heterotrimer composed of an alpha, a beta and a gamma chain.

EIF-2 functions in the early steps of protein synthesis by forming a ternary complex with GTP and initiator tRNA. This Thermoplasma volcanium (strain ATCC 51530 / DSM 4299 / JCM 9571 / NBRC 15438 / GSS1) protein is Translation initiation factor 2 subunit beta (eif2b).